The following is a 301-amino-acid chain: MTTKFNVKTFQGMILALQDYWANVGCTIVQPFDMEVGAGTSHPMTALRALGPEPMAFAYVQPSRRPTDGRYGENPNRLQHYYQFQVVIKPSPDNIQELYLGSLKMLGFDPTQHDIRFVEDNWENPTLGAWGLGWEVWLNGMEVTQFTYFQQVGGLECKPVTGEVTYGLERLAMYIQGVDSVYDLVWSDGPLGKTTYGDVFHQNEVEQSTYNFEYADVDFLFKAFEQYEKEATELLALEKPLPLPAYERILKAAHSFNMLDARKAISVTERQRYILRIRTLTKGVAEAYYVSREALGFPGCK.

The protein belongs to the class-II aminoacyl-tRNA synthetase family. In terms of assembly, tetramer of two alpha and two beta subunits.

It is found in the cytoplasm. It carries out the reaction tRNA(Gly) + glycine + ATP = glycyl-tRNA(Gly) + AMP + diphosphate. This is Glycine--tRNA ligase alpha subunit from Actinobacillus pleuropneumoniae serotype 5b (strain L20).